Consider the following 127-residue polypeptide: Fluoride-specific ion channel FluC (127 aa).

2 helical membrane-spanning segments follow: residues 4-24 and 36-56; these read WFWI…LSTW and GTLA…EIAA. Positions 75 and 78 each coordinate Na(+). A helical membrane pass occupies residues 100-120; it reads LANIAITLVVCLLAGVLGMVV.

This sequence belongs to the fluoride channel Fluc/FEX (TC 1.A.43) family.

Its subcellular location is the cell inner membrane. The enzyme catalyses fluoride(in) = fluoride(out). Na(+) is not transported, but it plays an essential structural role and its presence is essential for fluoride channel function. Its function is as follows. Fluoride-specific ion channel. Important for reducing fluoride concentration in the cell, thus reducing its toxicity. The polypeptide is Fluoride-specific ion channel FluC (Sorangium cellulosum (strain So ce56) (Polyangium cellulosum (strain So ce56))).